A 260-amino-acid chain; its full sequence is UPF0246 protein Bcep18194_A5551 (260 aa).

Belongs to the UPF0246 family.

In Burkholderia lata (strain ATCC 17760 / DSM 23089 / LMG 22485 / NCIMB 9086 / R18194 / 383), this protein is UPF0246 protein Bcep18194_A5551.